The chain runs to 279 residues: MLSRRGHRLSRFRKNKRRLRERLRQRIFFRDKVVPEAMEKPRVLVLTGAGISAESGIRTFRAADGLWEEHRVEDVATPEGFDRDPELVQAFYNARRRQLQQPEIQPNAAHLALAKLQDALGDRFLLVTQNIDNLHERAGNTNVIHMHGELLKVRCSQSGQVLDWTGDVTPEDKCHCCQFPAPLRPHVVWFGEMPLGMDEIYMALSMADIFIAIGTSGHVYPAAGFVHEAKLHGAHTVELNLEPSQVGNEFAEKYYGPASQVVPEFVEKLLKGLKAGSIA.

The Deacetylase sirtuin-type domain maps to 20-272; that stretch reads RERLRQRIFF…PEFVEKLLKG (253 aa). NAD(+) is bound at residue 48 to 67; the sequence is GAGISAESGIRTFRAADGLW. Substrate is bound by residues Tyr92 and Arg95. 129 to 132 is an NAD(+) binding site; sequence QNID. His147 (proton acceptor) is an active-site residue. Zn(2+)-binding residues include Cys155 and Cys174. Residues 214-216, 240-242, and Ala258 contribute to the NAD(+) site; these read GTS and NLE.

Belongs to the sirtuin family. Class III subfamily. As to quaternary structure, forms a 1:1 complex with acetyl-CoA synthetase (Acs). Zn(2+) serves as cofactor.

The protein resides in the cytoplasm. The catalysed reaction is N(6)-acetyl-L-lysyl-[protein] + NAD(+) + H2O = 2''-O-acetyl-ADP-D-ribose + nicotinamide + L-lysyl-[protein]. The enzyme catalyses N(6)-succinyl-L-lysyl-[protein] + NAD(+) + H2O = 2''-O-succinyl-ADP-D-ribose + nicotinamide + L-lysyl-[protein]. It catalyses the reaction N(6)-(2-hydroxyisobutanoyl)-L-lysyl-[protein] + NAD(+) + H2O = 2''-O-(2-hydroxyisobutanoyl)-ADP-D-ribose + nicotinamide + L-lysyl-[protein]. Its activity is regulated as follows. Deacetylation is inhibited by nicotinamide. NAD-dependent lysine deacetylase that specifically removes acetyl groups on target proteins. Also acts as a protein-lysine deacylase by mediating protein desuccinylation and de-2-hydroxyisobutyrylation. Modulates the activities of several proteins which are inactive in their acylated form. Activates the enzyme acetyl-CoA synthetase (acs) by deacetylating 'Lys-609' in the inactive, acetylated form of the enzyme. May also modulate the activity of other propionyl-adenosine monophosphate (AMP)-forming enzymes. The chain is NAD-dependent protein deacylase from Escherichia coli (strain K12).